The primary structure comprises 399 residues: 4-hydroxy-3-methylbut-2-enyl diphosphate reductase (399 aa).

Cys66 contacts [4Fe-4S] cluster. (2E)-4-hydroxy-3-methylbut-2-enyl diphosphate is bound at residue His96. A dimethylallyl diphosphate-binding site is contributed by His96. His96 contributes to the isopentenyl diphosphate binding site. Position 157 (Cys157) interacts with [4Fe-4S] cluster. Position 185 (His185) interacts with (2E)-4-hydroxy-3-methylbut-2-enyl diphosphate. His185 serves as a coordination point for dimethylallyl diphosphate. His185 contributes to the isopentenyl diphosphate binding site. Residue Glu187 is the Proton donor of the active site. (2E)-4-hydroxy-3-methylbut-2-enyl diphosphate is bound at residue Thr250. Cys288 contributes to the [4Fe-4S] cluster binding site. The (2E)-4-hydroxy-3-methylbut-2-enyl diphosphate site is built by Ser317, Ser318, Asn319, and Ser380. Residues Ser317, Ser318, Asn319, and Ser380 each contribute to the dimethylallyl diphosphate site. 4 residues coordinate isopentenyl diphosphate: Ser317, Ser318, Asn319, and Ser380.

This sequence belongs to the IspH family. It depends on [4Fe-4S] cluster as a cofactor.

It carries out the reaction isopentenyl diphosphate + 2 oxidized [2Fe-2S]-[ferredoxin] + H2O = (2E)-4-hydroxy-3-methylbut-2-enyl diphosphate + 2 reduced [2Fe-2S]-[ferredoxin] + 2 H(+). The catalysed reaction is dimethylallyl diphosphate + 2 oxidized [2Fe-2S]-[ferredoxin] + H2O = (2E)-4-hydroxy-3-methylbut-2-enyl diphosphate + 2 reduced [2Fe-2S]-[ferredoxin] + 2 H(+). Its pathway is isoprenoid biosynthesis; dimethylallyl diphosphate biosynthesis; dimethylallyl diphosphate from (2E)-4-hydroxy-3-methylbutenyl diphosphate: step 1/1. It functions in the pathway isoprenoid biosynthesis; isopentenyl diphosphate biosynthesis via DXP pathway; isopentenyl diphosphate from 1-deoxy-D-xylulose 5-phosphate: step 6/6. Catalyzes the conversion of 1-hydroxy-2-methyl-2-(E)-butenyl 4-diphosphate (HMBPP) into a mixture of isopentenyl diphosphate (IPP) and dimethylallyl diphosphate (DMAPP). Acts in the terminal step of the DOXP/MEP pathway for isoprenoid precursor biosynthesis. This Synechococcus sp. (strain CC9605) protein is 4-hydroxy-3-methylbut-2-enyl diphosphate reductase.